The chain runs to 257 residues: Large ribosomal subunit protein uL2 (257 aa).

The disordered stretch occupies residues 207 to 257 (VDHPHGGGNHQHVGHPTTLKRSSPPGQKAGKVAARRTGLIRGGNKEGAADN).

This sequence belongs to the universal ribosomal protein uL2 family. As to quaternary structure, component of the large ribosomal subunit.

It is found in the cytoplasm. Its function is as follows. Component of the large ribosomal subunit. The ribosome is a large ribonucleoprotein complex responsible for the synthesis of proteins in the cell. The polypeptide is Large ribosomal subunit protein uL2 (RPL8) (Entamoeba histolytica (strain ATCC 30459 / HM-1:IMSS / ABRM)).